Consider the following 134-residue polypeptide: Holo-[acyl-carrier-protein] synthase (134 aa).

Residues Asp8 and Glu57 each coordinate Mg(2+).

The protein belongs to the P-Pant transferase superfamily. AcpS family. Requires Mg(2+) as cofactor.

It localises to the cytoplasm. It catalyses the reaction apo-[ACP] + CoA = holo-[ACP] + adenosine 3',5'-bisphosphate + H(+). Transfers the 4'-phosphopantetheine moiety from coenzyme A to a Ser of acyl-carrier-protein. The sequence is that of Holo-[acyl-carrier-protein] synthase from Rhizobium rhizogenes (strain K84 / ATCC BAA-868) (Agrobacterium radiobacter).